Reading from the N-terminus, the 134-residue chain is Small ribosomal subunit protein uS8c (134 aa).

Belongs to the universal ribosomal protein uS8 family. Part of the 30S ribosomal subunit.

It localises to the plastid. It is found in the chloroplast. One of the primary rRNA binding proteins, it binds directly to 16S rRNA central domain where it helps coordinate assembly of the platform of the 30S subunit. This Nicotiana tomentosiformis (Tobacco) protein is Small ribosomal subunit protein uS8c (rps8).